The sequence spans 125 residues: MGLTGTTLVLVCVAFFGSAAAHNCQNGTRPASEENREGCDYYCWNAETKSWDQFFFGNGERCFYNTGEKGTCLNGECHLTTSSGGPDDTGDNTPPPTEKPKQKKKKPKKTKKPKRKSKKDQKENF.

The N-terminal stretch at 1–21 is a signal peptide; that stretch reads MGLTGTTLVLVCVAFFGSAAA. An N-linked (GlcNAc...) asparagine glycan is attached at asparagine 26. The segment at 81-125 is disordered; that stretch reads TSSGGPDDTGDNTPPPTEKPKQKKKKPKKTKKPKRKSKKDQKENF. Positions 101 to 119 are enriched in basic residues; sequence KQKKKKPKKTKKPKRKSKK.

The protein belongs to the salp14 family. In terms of assembly, homodimer. Interacts with host PLG. Interacts with host PLAT. Saliva (at protein level).

It is found in the secreted. Functionally, salivary protein that promotes host fibrinolysis via accelerating host plasmin generation from plasminogen (PLG) initiated by tPA/tissue-type plasminogen activator (PLAT). Does not affect urokinase (PLAU)-mediated fibrinolysis in the host. Enhances amidolytic activity of host coagulation factor Xa (F10). The chain is Ixonnexin from Ixodes scapularis (Black-legged tick).